The chain runs to 67 residues: Beta-defensin 9 (67 aa).

The first 24 residues, 1–24, serve as a signal peptide directing secretion; sequence MRTLCSLLLICCLLFSYTTPAANS. Intrachain disulfides connect C34–C62, C41–C55, and C45–C63.

Belongs to the beta-defensin family. Weakly expressed in adult and neonatal brain.

The protein localises to the secreted. Its function is as follows. Has antibacterial activity. The chain is Beta-defensin 9 (Defb9) from Mus musculus (Mouse).